The following is a 242-amino-acid chain: Interleukin-34 (242 aa).

A signal peptide spans 1–20 (MPRGFTWLRYLGIFLGVALG). N-linked (GlcNAc...) asparagine glycosylation occurs at N76. The segment at 210-242 (TQLYPPPPWSPSSPPHSTGSVRPVRAQGEGLLP) is disordered. Residues 213 to 223 (YPPPPWSPSSP) show a composition bias toward pro residues.

It belongs to the IL-34 family. As to quaternary structure, homodimer. Interacts with CSF1R. Detected in the sinusoidal epithelium in the red pulp of spleen (at protein level). Predominantly expressed in spleen. Also detected in a range of other tissues including heart, brain, lung, liver, kidney, thymus, testis, ovary, small intestine, prostate and colon.

Its subcellular location is the secreted. Functionally, cytokine that promotes the proliferation, survival and differentiation of monocytes and macrophages. Promotes the release of pro-inflammatory chemokines, and thereby plays an important role in innate immunity and in inflammatory processes. Plays an important role in the regulation of osteoclast proliferation and differentiation, and in the regulation of bone resorption. Signaling via CSF1R and its downstream effectors stimulates phosphorylation of MAPK1/ERK2 AND MAPK3/ERK1. This Homo sapiens (Human) protein is Interleukin-34 (IL34).